Consider the following 573-residue polypeptide: Acyl-coenzyme A synthetase ACSM1, mitochondrial (573 aa).

The transit peptide at 1–35 (MQWLKSFQICKVLQGFSLSPTQLHRRLFSRVGAPR) directs the protein to the mitochondrion. N6-succinyllysine is present on Lys-81. Residue Lys-142 is modified to N6-acetyllysine; alternate. The residue at position 142 (Lys-142) is an N6-succinyllysine; alternate. Lys-179 is modified (N6-succinyllysine). Lys-200 bears the N6-acetyllysine; alternate mark. Residue Lys-200 is modified to N6-succinyllysine; alternate. The residue at position 210 (Lys-210) is an N6-acetyllysine. An ATP-binding site is contributed by 222-230 (TSGTTGYPK). N6-succinyllysine occurs at positions 233 and 324. An N6-acetyllysine; alternate mark is found at Lys-352 and Lys-387. Lys-352 and Lys-387 each carry N6-succinyllysine; alternate. Residues Asp-448 and Arg-463 each coordinate ATP. Lys-501 bears the N6-succinyllysine mark. Lys-527 carries the N6-acetyllysine modification. An N6-acetyllysine; alternate modification is found at Lys-534. Lys-534 carries the post-translational modification N6-succinyllysine; alternate. N6-acetyllysine is present on Lys-545. Lys-559 provides a ligand contact to ATP.

This sequence belongs to the ATP-dependent AMP-binding enzyme family. As to quaternary structure, monomer. Requires Mg(2+) as cofactor. Mn(2+) is required as a cofactor. Highly expressed in liver and kidney.

The protein resides in the mitochondrion matrix. It is found in the mitochondrion. The enzyme catalyses a medium-chain fatty acid + ATP + CoA = a medium-chain fatty acyl-CoA + AMP + diphosphate. The catalysed reaction is benzoate + ATP + CoA = benzoyl-CoA + AMP + diphosphate. It catalyses the reaction (R)-lipoate + GTP + H(+) = (R)-lipoyl-GMP + diphosphate. It carries out the reaction octanoate + ATP + CoA = octanoyl-CoA + AMP + diphosphate. The enzyme catalyses decanoate + ATP + CoA = decanoyl-CoA + AMP + diphosphate. The catalysed reaction is dodecanoate + ATP + CoA = dodecanoyl-CoA + AMP + diphosphate. It catalyses the reaction tetradecanoate + ATP + CoA = tetradecanoyl-CoA + AMP + diphosphate. It carries out the reaction hexanoate + ATP + CoA = hexanoyl-CoA + AMP + diphosphate. The enzyme catalyses butanoate + ATP + CoA = butanoyl-CoA + AMP + diphosphate. The catalysed reaction is hexadecanoate + ATP + CoA = hexadecanoyl-CoA + AMP + diphosphate. In terms of biological role, catalyzes the activation of fatty acids by CoA to produce an acyl-CoA, the first step in fatty acid metabolism. Capable of activating medium-chain fatty acids (e.g. butyric (C4) to decanoic (C10) acids), and certain carboxylate-containing xenobiotics, e.g. benzoate. Also catalyzes the activation of lipoate to lipoyl-nucleoside monophosphate. Activates lipoate with GTP at a 1000-fold higher rate than with ATP and activates both (R)- and (S)-lipoate to the respective lipoyl-GMP, with a preference for (R)-lipoate. In Mus musculus (Mouse), this protein is Acyl-coenzyme A synthetase ACSM1, mitochondrial (Acsm1).